A 653-amino-acid polypeptide reads, in one-letter code: Macrolide export ATP-binding/permease protein MacB (653 aa).

Positions 6–244 (LALSHICREF…AAASLPADKP (239 aa)) constitute an ABC transporter domain. 42–49 (GSSGSGKS) contributes to the ATP binding site. The next 4 helical transmembrane spans lie at 277–297 (FLTM…VALG), 526–546 (LAFL…IGVM), 587–607 (LGGI…NLLL), and 617–637 (FSIG…GYFP).

This sequence belongs to the ABC transporter superfamily. Macrolide exporter (TC 3.A.1.122) family. As to quaternary structure, homodimer.

The protein localises to the cell inner membrane. In terms of biological role, non-canonical ABC transporter that contains transmembrane domains (TMD), which form a pore in the inner membrane, and an ATP-binding domain (NBD), which is responsible for energy generation. Confers resistance against macrolides. This chain is Macrolide export ATP-binding/permease protein MacB, found in Bradyrhizobium diazoefficiens (strain JCM 10833 / BCRC 13528 / IAM 13628 / NBRC 14792 / USDA 110).